We begin with the raw amino-acid sequence, 586 residues long: Inner membrane protein YejM (586 aa).

Residues 1–20 are Cytoplasmic-facing; the sequence is MVTHRQRYREKVSQMVSWGH. Residues 21–43 traverse the membrane as a helical segment; that stretch reads WFALFNILLSLVIGSRYLFIADW. The Periplasmic segment spans residues 44-57; sequence PTTLAGRIYSYVSI. Residues 58 to 80 traverse the membrane as a helical segment; the sequence is IGHFSFLVFATYLLILFPLTFIV. The Cytoplasmic segment spans residues 81–84; it reads GSQR. Residues 85 to 103 traverse the membrane as a helical segment; sequence LMRFLSVILATAGMTLLLI. Topologically, residues 104–134 are periplasmic; the sequence is DSEVFTRFHLHLNPIVWQLVINPDENEMARD. Residues 135–157 traverse the membrane as a helical segment; the sequence is WQLMFISVPVILLLELVFATWSW. Residues 158–168 are Cytoplasmic-facing; sequence QKLRSLTRRRR. A helical transmembrane segment spans residues 169–191; the sequence is FARPLAAFLFIAFIASHVVYIWA. The Periplasmic portion of the chain corresponds to 192–586; it reads DANFYRPITM…LTDEKRFIAN (395 aa).

To H.influenzae HI_0842.

Its subcellular location is the cell inner membrane. The polypeptide is Inner membrane protein YejM (yejM) (Escherichia coli O157:H7).